The sequence spans 42 residues: Large ribosomal subunit protein bL36 (42 aa).

This sequence belongs to the bacterial ribosomal protein bL36 family.

This is Large ribosomal subunit protein bL36 from Ehrlichia ruminantium (strain Gardel).